The chain runs to 380 residues: tRNA-specific 2-thiouridylase MnmA (380 aa).

Residues 12–19 (GLSGGVDS) and Met-38 contribute to the ATP site. An interaction with target base in tRNA region spans residues 108–110 (NPD). Catalysis depends on Cys-113, which acts as the Nucleophile. Cys-113 and Cys-210 are disulfide-bonded. ATP is bound at residue Gly-138. An interaction with tRNA region spans residues 160-162 (KDQ). Cys-210 functions as the Cysteine persulfide intermediate in the catalytic mechanism.

This sequence belongs to the MnmA/TRMU family.

Its subcellular location is the cytoplasm. It carries out the reaction S-sulfanyl-L-cysteinyl-[protein] + uridine(34) in tRNA + AH2 + ATP = 2-thiouridine(34) in tRNA + L-cysteinyl-[protein] + A + AMP + diphosphate + H(+). Catalyzes the 2-thiolation of uridine at the wobble position (U34) of tRNA, leading to the formation of s(2)U34. This Ureaplasma urealyticum serovar 10 (strain ATCC 33699 / Western) protein is tRNA-specific 2-thiouridylase MnmA.